Consider the following 560-residue polypeptide: Serine/threonine-protein kinase TOS3 (560 aa).

Residues 50–344 form the Protein kinase domain; the sequence is FEILATLGNG…LADIKVHPFM (295 aa). ATP is bound by residues 56–64 and Lys-79; that span reads LGNGQYGKV. The active-site Proton acceptor is the Asp-189.

The protein belongs to the protein kinase superfamily. Ser/Thr protein kinase family. In terms of processing, autophosphorylated.

The catalysed reaction is L-seryl-[protein] + ATP = O-phospho-L-seryl-[protein] + ADP + H(+). The enzyme catalyses L-threonyl-[protein] + ATP = O-phospho-L-threonyl-[protein] + ADP + H(+). In terms of biological role, one of the three SNF1 protein kinases (with SAK1 and ELM1) which are required for growth on nonfermentable carbon sources and nonpreferred sugars and for response to environmental stress. Activates SNF1 by phosphorylation of its activation-loop 'Thr-210'. Required for the regulation by SNF1 of the transcription of a large set of genes, the modification the activity of metabolic enzymes, and the control of various nutrient-responsive cellular developmental processes. Also phosphorylates GAL83, MIG1 and SIP2. The sequence is that of Serine/threonine-protein kinase TOS3 (TOS3) from Saccharomyces cerevisiae (strain YJM789) (Baker's yeast).